The chain runs to 466 residues: Chromosomal replication initiator protein DnaA (466 aa).

Residues 1–86 are domain I, interacts with DnaA modulators; the sequence is MSLSLWQQCL…EVGTKPVTQT (86 aa). The domain II stretch occupies residues 86–129; that stretch reads TLKTPVHNVVAPTQTTTAQPQRVAPAARSGWDNVPAPAEPTYRS. The tract at residues 130–346 is domain III, AAA+ region; sequence NVNVKHTFDN…GALNRVIANA (217 aa). ATP-binding residues include G174, G176, K177, and T178. The domain IV, binds dsDNA stretch occupies residues 347–466; sequence NFTGRAITID…FSNLIRTLSS (120 aa).

The protein belongs to the DnaA family. As to quaternary structure, oligomerizes as a right-handed, spiral filament on DNA at oriC.

The protein localises to the cytoplasm. Functionally, plays an essential role in the initiation and regulation of chromosomal replication. ATP-DnaA binds to the origin of replication (oriC) to initiate formation of the DNA replication initiation complex once per cell cycle. Binds the DnaA box (a 9 base pair repeat at the origin) and separates the double-stranded (ds)DNA. Forms a right-handed helical filament on oriC DNA; dsDNA binds to the exterior of the filament while single-stranded (ss)DNA is stabiized in the filament's interior. The ATP-DnaA-oriC complex binds and stabilizes one strand of the AT-rich DNA unwinding element (DUE), permitting loading of DNA polymerase. After initiation quickly degrades to an ADP-DnaA complex that is not apt for DNA replication. Binds acidic phospholipids. This chain is Chromosomal replication initiator protein DnaA, found in Salmonella gallinarum (strain 287/91 / NCTC 13346).